The following is a 512-amino-acid chain: Dihydroniloticin synthase CYP71CD2 (512 aa).

Residues 1–21 form a helical membrane-spanning segment; the sequence is MNLQLDYFSITSFLVFLVVLF. C449 is a heme binding site.

This sequence belongs to the cytochrome P450 family. The cofactor is heme.

It is found in the membrane. It catalyses the reaction tirucalla-7,24-dien-3beta-ol + 2 reduced [NADPH--hemoprotein reductase] + 2 O2 = dihydroniloticin + 2 oxidized [NADPH--hemoprotein reductase] + 2 H2O + 2 H(+). The protein operates within secondary metabolite biosynthesis; terpenoid biosynthesis. In terms of biological role, monooxygenase involved in the biosynthesis of limonoids triterpene natural products such as azadirachtin, an antifeedant widely used as bioinsecticide, and possessing many medicinal applications including anti-tumoral, anti-malarial, anti-rheumatic, antibacterial, anti-inflammatory, anti-pyretic and diuretic effects. Catalyzes the conversion of tirucalladienol to dihydroniloticin. The chain is Dihydroniloticin synthase CYP71CD2 from Azadirachta indica (Neem tree).